The chain runs to 299 residues: Regucalcin (299 aa).

Residue glutamate 18 coordinates a divalent metal cation. Substrate-binding residues include arginine 101, asparagine 103, and glutamate 121. Lysine 144 carries the N6-succinyllysine modification. Residues asparagine 154 and aspartate 204 each coordinate a divalent metal cation. The active-site Proton donor/acceptor is the aspartate 204. Residues lysine 244 and lysine 253 each carry the N6-succinyllysine modification.

Belongs to the SMP-30/CGR1 family. In terms of assembly, monomer. Requires Zn(2+) as cofactor. Mn(2+) serves as cofactor. The cofactor is Ca(2+). Mg(2+) is required as a cofactor.

It localises to the cytoplasm. It carries out the reaction D-glucono-1,5-lactone + H2O = D-gluconate + H(+). Gluconolactonase with low activity towards other sugar lactones, including gulonolactone and galactonolactone. Can also hydrolyze diisopropyl phosphorofluoridate and phenylacetate (in vitro). Calcium-binding protein. Modulates Ca(2+) signaling, and Ca(2+)-dependent cellular processes and enzyme activities. The protein is Regucalcin (RGN) of Pongo abelii (Sumatran orangutan).